Reading from the N-terminus, the 210-residue chain is Leucyl/phenylalanyl-tRNA--protein transferase (210 aa).

This sequence belongs to the L/F-transferase family.

The protein resides in the cytoplasm. It catalyses the reaction N-terminal L-lysyl-[protein] + L-leucyl-tRNA(Leu) = N-terminal L-leucyl-L-lysyl-[protein] + tRNA(Leu) + H(+). The catalysed reaction is N-terminal L-arginyl-[protein] + L-leucyl-tRNA(Leu) = N-terminal L-leucyl-L-arginyl-[protein] + tRNA(Leu) + H(+). It carries out the reaction L-phenylalanyl-tRNA(Phe) + an N-terminal L-alpha-aminoacyl-[protein] = an N-terminal L-phenylalanyl-L-alpha-aminoacyl-[protein] + tRNA(Phe). Its function is as follows. Functions in the N-end rule pathway of protein degradation where it conjugates Leu, Phe and, less efficiently, Met from aminoacyl-tRNAs to the N-termini of proteins containing an N-terminal arginine or lysine. The polypeptide is Leucyl/phenylalanyl-tRNA--protein transferase (Ruegeria pomeroyi (strain ATCC 700808 / DSM 15171 / DSS-3) (Silicibacter pomeroyi)).